The primary structure comprises 382 residues: Alanine racemase 1 (382 aa).

The active-site Proton acceptor; specific for D-alanine is the Lys-39. Lys-39 bears the N6-(pyridoxal phosphate)lysine mark. Arg-138 contacts substrate. The Proton acceptor; specific for L-alanine role is filled by Tyr-265. Residue Met-312 coordinates substrate.

Belongs to the alanine racemase family. Requires pyridoxal 5'-phosphate as cofactor.

It carries out the reaction L-alanine = D-alanine. It functions in the pathway amino-acid biosynthesis; D-alanine biosynthesis; D-alanine from L-alanine: step 1/1. Catalyzes the interconversion of L-alanine and D-alanine. May also act on other amino acids. The chain is Alanine racemase 1 (alr1) from Staphylococcus aureus (strain NCTC 8325 / PS 47).